The chain runs to 166 residues: Small ribosomal subunit protein uS5 (166 aa).

Positions Y12 to V75 constitute an S5 DRBM domain.

This sequence belongs to the universal ribosomal protein uS5 family. In terms of assembly, part of the 30S ribosomal subunit. Contacts proteins S4 and S8.

In terms of biological role, with S4 and S12 plays an important role in translational accuracy. Its function is as follows. Located at the back of the 30S subunit body where it stabilizes the conformation of the head with respect to the body. In Pseudomonas putida (strain ATCC 700007 / DSM 6899 / JCM 31910 / BCRC 17059 / LMG 24140 / F1), this protein is Small ribosomal subunit protein uS5.